The primary structure comprises 23 residues: Elongation factor Tu (23 aa).

The protein belongs to the GTP-binding elongation factor family. EF-Tu/EF-1A subfamily. In terms of assembly, monomer. In terms of processing, the N-terminus is blocked. Post-translationally, the C-terminus may be subjected to proteolysis.

It localises to the cytoplasm. This protein promotes the GTP-dependent binding of aminoacyl-tRNA to the A-site of ribosomes during protein biosynthesis. The chain is Elongation factor Tu (tuf) from Delftia acidovorans (Pseudomonas acidovorans).